The chain runs to 148 residues: Lysozyme C (148 aa).

A signal peptide spans 1 to 18; sequence MKAVIILGLVLLSVTVQG. A C-type lysozyme domain is found at 19–148; sequence KIFERCELAR…VSQYVQGCGV (130 aa). 4 disulfide bridges follow: cysteine 24/cysteine 146, cysteine 48/cysteine 134, cysteine 83/cysteine 99, and cysteine 95/cysteine 113. Active-site residues include glutamate 53 and aspartate 71.

This sequence belongs to the glycosyl hydrolase 22 family. As to quaternary structure, monomer.

It localises to the secreted. The enzyme catalyses Hydrolysis of (1-&gt;4)-beta-linkages between N-acetylmuramic acid and N-acetyl-D-glucosamine residues in a peptidoglycan and between N-acetyl-D-glucosamine residues in chitodextrins.. Lysozymes have primarily a bacteriolytic function; those in tissues and body fluids are associated with the monocyte-macrophage system and enhance the activity of immunoagents. In Miopithecus talapoin (Angolan talapoin), this protein is Lysozyme C (LYZ).